The sequence spans 490 residues: Sushi domain-containing protein 4 (490 aa).

The segment at 1 to 21 (MYHGMNPSNGDGFLEQQQQQQ) is disordered. Residues 1–41 (MYHGMNPSNGDGFLEQQQQQQQPQSPQRLLAVILWFQLALC) form the signal peptide. The Extracellular segment spans residues 42–319 (FGPAQLTGGF…PSTHETLLTT (278 aa)). Sushi domains lie at 55–119 (QVCA…ICVQ), 120–179 (EDCR…ICQG), 178–239 (QGCL…RCLA), and 241–304 (EVCP…YCIK). Disulfide bonds link C57–C99, C85–C117, C122–C165, C147–C177, C180–C224, C210–C237, C243–C289, and C274–C302. N-linked (GlcNAc...) asparagine glycans are attached at residues N104 and N134. N-linked (GlcNAc...) asparagine glycosylation is present at N192. A helical transmembrane segment spans residues 320–340 (WKIVAFTATSVLLVLLLVILA). Topologically, residues 341–490 (RMFQTKFKAH…DEIPLMEEDP (150 aa)) are cytoplasmic. A disordered region spans residues 401–490 (GCPLPVDDQS…DEIPLMEEDP (90 aa)). Positions 430–456 (CDSVSGSSELLQSLYSPPRCQESTHPA) are enriched in polar residues. The span at 479 to 490 (IADEIPLMEEDP) shows a compositional bias: acidic residues.

As to expression, isoform 3 is the predominant isoform in all tissues except cortex, cerebellum, kidney, and breast. Isoform 1 is found primarily in the esophagus and the brain.

The protein localises to the membrane. It localises to the secreted. In terms of biological role, acts as a complement inhibitor by disrupting the formation of the classical C3 convertase. Isoform 3 inhibits the classical complement pathway, while membrane-bound isoform 1 inhibits deposition of C3b via both the classical and alternative complement pathways. This Homo sapiens (Human) protein is Sushi domain-containing protein 4 (SUSD4).